We begin with the raw amino-acid sequence, 181 residues long: Inner membrane-spanning protein YciB (181 aa).

5 helical membrane passes run leucine 10 to isoleucine 30, methionine 50 to aspartate 70, serine 72 to serine 92, valine 118 to phenylalanine 138, and phenylalanine 148 to leucine 168.

It belongs to the YciB family.

The protein resides in the cell inner membrane. Plays a role in cell envelope biogenesis, maintenance of cell envelope integrity and membrane homeostasis. This is Inner membrane-spanning protein YciB from Shewanella halifaxensis (strain HAW-EB4).